The sequence spans 218 residues: GTP cyclohydrolase 1 (218 aa).

The Zn(2+) site is built by Cys109, His112, and Cys180.

This sequence belongs to the GTP cyclohydrolase I family. Toroid-shaped homodecamer, composed of two pentamers of five dimers.

The catalysed reaction is GTP + H2O = 7,8-dihydroneopterin 3'-triphosphate + formate + H(+). Its pathway is cofactor biosynthesis; 7,8-dihydroneopterin triphosphate biosynthesis; 7,8-dihydroneopterin triphosphate from GTP: step 1/1. This Haemophilus influenzae (strain 86-028NP) protein is GTP cyclohydrolase 1.